The primary structure comprises 291 residues: 4-diphosphocytidyl-2-C-methyl-D-erythritol kinase (291 aa).

Lysine 10 is an active-site residue. An ATP-binding site is contributed by 99–109 (PMGGGLGGGSS). Aspartate 141 is an active-site residue.

This sequence belongs to the GHMP kinase family. IspE subfamily. As to quaternary structure, homodimer.

The enzyme catalyses 4-CDP-2-C-methyl-D-erythritol + ATP = 4-CDP-2-C-methyl-D-erythritol 2-phosphate + ADP + H(+). It participates in isoprenoid biosynthesis; isopentenyl diphosphate biosynthesis via DXP pathway; isopentenyl diphosphate from 1-deoxy-D-xylulose 5-phosphate: step 3/6. In terms of biological role, catalyzes the phosphorylation of the position 2 hydroxy group of 4-diphosphocytidyl-2C-methyl-D-erythritol. The protein is 4-diphosphocytidyl-2-C-methyl-D-erythritol kinase of Photorhabdus laumondii subsp. laumondii (strain DSM 15139 / CIP 105565 / TT01) (Photorhabdus luminescens subsp. laumondii).